The primary structure comprises 159 residues: Small ribosomal subunit protein uS4 (159 aa).

The S4 RNA-binding domain occupies 106-158; it reads RRLQTIVYRMGLAKSIYHARQLIVHGHIAVAGRRVSSPGFLVPRELEDKISLI.

It belongs to the universal ribosomal protein uS4 family. As to quaternary structure, part of the 30S ribosomal subunit. Contacts protein S5. The interaction surface between S4 and S5 is involved in control of translational fidelity.

Its function is as follows. One of the primary rRNA binding proteins, it binds directly to 16S rRNA where it nucleates assembly of the body of the 30S subunit. In terms of biological role, with S5 and S12 plays an important role in translational accuracy. The chain is Small ribosomal subunit protein uS4 from Pyrobaculum neutrophilum (strain DSM 2338 / JCM 9278 / NBRC 100436 / V24Sta) (Thermoproteus neutrophilus).